A 261-amino-acid polypeptide reads, in one-letter code: Serine acetyltransferase (261 aa).

The protein belongs to the transferase hexapeptide repeat family.

The protein localises to the cytoplasm. The enzyme catalyses L-serine + acetyl-CoA = O-acetyl-L-serine + CoA. It participates in amino-acid biosynthesis; L-cysteine biosynthesis; L-cysteine from L-serine: step 1/2. In Buchnera aphidicola subsp. Schizaphis graminum (strain Sg), this protein is Serine acetyltransferase (cysE).